The chain runs to 757 residues: Elongation factor G, mitochondrial (757 aa).

Residues 66–344 (DRMRNIGISA…VLDYLPCPME (279 aa)) form the tr-type G domain. GTP-binding positions include 75-82 (AHIDSGKT), 142-146 (DTPGH), and 196-199 (NKLD).

It belongs to the TRAFAC class translation factor GTPase superfamily. Classic translation factor GTPase family. EF-G/EF-2 subfamily.

It is found in the mitochondrion. Its pathway is protein biosynthesis; polypeptide chain elongation. Its function is as follows. Mitochondrial GTPase that catalyzes the GTP-dependent ribosomal translocation step during translation elongation. During this step, the ribosome changes from the pre-translocational (PRE) to the post-translocational (POST) state as the newly formed A-site-bound peptidyl-tRNA and P-site-bound deacylated tRNA move to the P and E sites, respectively. Catalyzes the coordinated movement of the two tRNA molecules, the mRNA and conformational changes in the ribosome. The protein is Elongation factor G, mitochondrial of Oryza sativa subsp. japonica (Rice).